A 1285-amino-acid chain; its full sequence is DNA polymerase II large subunit (1285 aa).

Residues T565–P586 form a disordered region.

Belongs to the archaeal DNA polymerase II family. As to quaternary structure, heterodimer of a large subunit and a small subunit. In terms of processing, this protein undergoes a protein self splicing that involves a post-translational excision of the intervening region (intein) followed by peptide ligation.

The catalysed reaction is DNA(n) + a 2'-deoxyribonucleoside 5'-triphosphate = DNA(n+1) + diphosphate. It carries out the reaction Exonucleolytic cleavage in the 3'- to 5'-direction to yield nucleoside 5'-phosphates.. Functionally, possesses two activities: a DNA synthesis (polymerase) and an exonucleolytic activity that degrades single-stranded DNA in the 3'- to 5'-direction. Has a template-primer preference which is characteristic of a replicative DNA polymerase. This is DNA polymerase II large subunit from Methanoculleus marisnigri (strain ATCC 35101 / DSM 1498 / JR1).